The primary structure comprises 157 residues: Transcriptional repressor NrdR (157 aa).

Residues 3-34 (CPFCGFADTRVIDSRLGKEGNNIRRRRECSQC) fold into a zinc finger. Residues 49 to 139 (PLIIKKDARR…VYRQFKDINE (91 aa)) form the ATP-cone domain.

Belongs to the NrdR family. The cofactor is Zn(2+).

In terms of biological role, negatively regulates transcription of bacterial ribonucleotide reductase nrd genes and operons by binding to NrdR-boxes. In Syntrophotalea carbinolica (strain DSM 2380 / NBRC 103641 / GraBd1) (Pelobacter carbinolicus), this protein is Transcriptional repressor NrdR.